A 184-amino-acid chain; its full sequence is Vacuolar protein sorting-associated protein 68 (184 aa).

An N-acetylmethionine modification is found at Met-1. Position 8 is a phosphoserine (Ser-8). The helical transmembrane segment at 26-46 (GVYLSGALYALGFWIFLDAVL) threads the bilayer. Asn-52 is a glycosylation site (N-linked (GlcNAc...) asparagine). Transmembrane regions (helical) follow at residues 56-76 (VHVT…TLIV), 115-135 (LFFG…VLII), and 150-170 (MGVN…VLWI).

This sequence belongs to the UPF0220 family.

It is found in the vacuole membrane. The protein resides in the mitochondrion. Its function is as follows. Involved in vacuolar protein sorting. The protein is Vacuolar protein sorting-associated protein 68 (VPS68) of Saccharomyces cerevisiae (strain ATCC 204508 / S288c) (Baker's yeast).